A 250-amino-acid chain; its full sequence is Imidazole glycerol phosphate synthase subunit HisF (250 aa).

Active-site residues include Asp-11 and Asp-130.

This sequence belongs to the HisA/HisF family. Heterodimer of HisH and HisF.

Its subcellular location is the cytoplasm. It carries out the reaction 5-[(5-phospho-1-deoxy-D-ribulos-1-ylimino)methylamino]-1-(5-phospho-beta-D-ribosyl)imidazole-4-carboxamide + L-glutamine = D-erythro-1-(imidazol-4-yl)glycerol 3-phosphate + 5-amino-1-(5-phospho-beta-D-ribosyl)imidazole-4-carboxamide + L-glutamate + H(+). The protein operates within amino-acid biosynthesis; L-histidine biosynthesis; L-histidine from 5-phospho-alpha-D-ribose 1-diphosphate: step 5/9. Functionally, IGPS catalyzes the conversion of PRFAR and glutamine to IGP, AICAR and glutamate. The HisF subunit catalyzes the cyclization activity that produces IGP and AICAR from PRFAR using the ammonia provided by the HisH subunit. The sequence is that of Imidazole glycerol phosphate synthase subunit HisF from Bacteroides fragilis (strain YCH46).